Reading from the N-terminus, the 529-residue chain is uncharacterized protein (529 aa).

Residues 1 to 11 (MSSSKIKELRE) show a composition bias toward basic and acidic residues. Disordered regions lie at residues 1–222 (MSSS…IPYS), 237–256 (PFLE…EENV), 271–372 (AFLQ…TAAP), and 393–488 (GSGN…PSFT). Over residues 27-40 (MQQNQPRPATTTPP) the composition is skewed to polar residues. Over residues 83–95 (TKGRAHPRSRRPP) the composition is skewed to basic residues. The segment covering 110–125 (NTGSTKAADTKSSVEA) has biased composition (polar residues). Ser-128 is modified (phosphoserine). Residues 170–199 (TTKAVEATTSKASSAHTDTLATSASNSDRG) show a composition bias toward polar residues. Position 217 is a phosphoserine (Ser-217). Over residues 237–249 (PFLESKVLPQNNE) the composition is skewed to polar residues. Residues 321-334 (SSPLSFSASKSPAA) are compositionally biased toward low complexity. The span at 336 to 362 (DSSTKTPTEQVNVVSKQAPTTSSTSVI) shows a compositional bias: polar residues. The span at 409-426 (ERTKSLSKESPVEPEKPA) shows a compositional bias: basic and acidic residues. Residues 430-455 (ATSSSTPTTENKESWTNQGIKSSQQR) are compositionally biased toward polar residues. A compositionally biased stretch (low complexity) spans 456 to 470 (SANASPATSPSNQAS). The span at 471–488 (IHASFTKESSTHSSPSFT) shows a compositional bias: polar residues.

It is found in the cytoplasm. This is an uncharacterized protein from Schizosaccharomyces pombe (strain 972 / ATCC 24843) (Fission yeast).